Reading from the N-terminus, the 431-residue chain is MIDIQLLRKDIDSVAARLAGRKFKLDVAAFNALEAERKQIQSSTEDLQNKRNTLSKQIGALKGKGEDTSAVMAEVAGIGDELKASAARLDIVQAKISEFMLSIPNLPHESVPVGTDEAGNVELRKVGTPRSFDFEIRDHVDVGAALGLDFDVAAKITGSRFSVMKGGIARLHRALAQFMLDTHTAEHGYTECYTPYIVNADSLQGTGQLPKFEADLFAVKKGGQEGEGEALYLIPTAEVPLTNIVRDEIVAGDALPIRMTAHSPCFRSEAGSYGRDTRGMIRQHQFDKVEMVQVVHPEKSYEALDEMCGHAENILKKLGLPYRVITLCTGDMGFGATKTYDLEVWLPAQNTYREISSVSNCEAFQARRMQARFRNAQGKPESVHTLNGSGLAVGRTLVAVLENYQQADGSVTIPEVLHPYMGGLQRLTPQA.

236 to 238 contacts L-serine; it reads TAE. 267–269 lines the ATP pocket; that stretch reads RSE. Glu290 serves as a coordination point for L-serine. 354 to 357 contributes to the ATP binding site; the sequence is EISS. Ser389 is an L-serine binding site.

Belongs to the class-II aminoacyl-tRNA synthetase family. Type-1 seryl-tRNA synthetase subfamily. Homodimer. The tRNA molecule binds across the dimer.

The protein resides in the cytoplasm. It carries out the reaction tRNA(Ser) + L-serine + ATP = L-seryl-tRNA(Ser) + AMP + diphosphate + H(+). The enzyme catalyses tRNA(Sec) + L-serine + ATP = L-seryl-tRNA(Sec) + AMP + diphosphate + H(+). The protein operates within aminoacyl-tRNA biosynthesis; selenocysteinyl-tRNA(Sec) biosynthesis; L-seryl-tRNA(Sec) from L-serine and tRNA(Sec): step 1/1. In terms of biological role, catalyzes the attachment of serine to tRNA(Ser). Is also able to aminoacylate tRNA(Sec) with serine, to form the misacylated tRNA L-seryl-tRNA(Sec), which will be further converted into selenocysteinyl-tRNA(Sec). In Janthinobacterium sp. (strain Marseille) (Minibacterium massiliensis), this protein is Serine--tRNA ligase.